Reading from the N-terminus, the 502-residue chain is MSIRAEEISALIKQQIENYQSEIEVSDVGTVIQVGDGIARAHGLDNVMAGELVEFSNGVMGLAQNLEENNVGIIILGPYTEIREGDEVRRTGRIMQVPVGKELIGRVVNPLGQPVDGLGPINTTNTRPIESPAPGVMDRKSVHEPLQTGIKAIDALVPIGRGQRELIIGDRQTGKTAVALDTIINQKDEDMICIYVAIGQKESTVRNVVETLRKHGALDYTIVVTASASQPAPLLYLAPYAGVTMGEEFMYNGKHVLVVYDDLSKQAAAYRELSLLLRRPPGREAYPGDVFYLHSRLLERAAKLSDAKGGGSLTALPFIETQAGDVSAYIPTNVISITDGQIFLQSDLFFSGVRPAIDAGTSVSRVGGSAQIKAMSKVSGTLRLDLASYRELEAFAQFGSDLDKATQAKLNRGARTVEVLKQGLHKPLRVEKQVIILYALTRGFLDDIPVVDITRFEEEFHAWLDSNATDLLEEIRTTKKLADDDKFAAAINGFKKVFVASE.

Residues 115-135 (VDGLGPINTTNTRPIESPAPG) form a disordered region. Residue 169–176 (GDRQTGKT) participates in ATP binding.

Belongs to the ATPase alpha/beta chains family. In terms of assembly, F-type ATPases have 2 components, CF(1) - the catalytic core - and CF(0) - the membrane proton channel. CF(1) has five subunits: alpha(3), beta(3), gamma(1), delta(1), epsilon(1). CF(0) has three main subunits: a(1), b(2) and c(9-12). The alpha and beta chains form an alternating ring which encloses part of the gamma chain. CF(1) is attached to CF(0) by a central stalk formed by the gamma and epsilon chains, while a peripheral stalk is formed by the delta and b chains.

It is found in the cell membrane. It carries out the reaction ATP + H2O + 4 H(+)(in) = ADP + phosphate + 5 H(+)(out). Its function is as follows. Produces ATP from ADP in the presence of a proton gradient across the membrane. The alpha chain is a regulatory subunit. The chain is ATP synthase subunit alpha from Bacillus cereus (strain B4264).